Here is a 264-residue protein sequence, read N- to C-terminus: MSIVRSDKPFVLAGRTYQSRLLVGTGKYRDMEETRLAIEASGAEIVTFAVRRTNLGQIEGEPNLLEVLSPDRYTFLPNTAGCYDAIEAVRTCRLARELLDGHNLVKLEVLADQKTLFPNVIETLKAAETLVKEGFDVMVYTSDDPIIARQLAEIGCIAVMPLAGLIGSGLGICNPYNLQIILEEAKIPVLVDAGVGTASDATIAMELGCDAVLMNSAIAHAQQPIMMAEAMNHAIVAGRLAYLAGRMPKKLYASASSPLDGLIK.

Lysine 106 acts as the Schiff-base intermediate with DXP in catalysis. Residues glycine 167, alanine 193 to glycine 194, and asparagine 215 to serine 216 contribute to the 1-deoxy-D-xylulose 5-phosphate site.

The protein belongs to the ThiG family. As to quaternary structure, homotetramer. Forms heterodimers with either ThiH or ThiS.

The protein localises to the cytoplasm. It carries out the reaction [ThiS sulfur-carrier protein]-C-terminal-Gly-aminoethanethioate + 2-iminoacetate + 1-deoxy-D-xylulose 5-phosphate = [ThiS sulfur-carrier protein]-C-terminal Gly-Gly + 2-[(2R,5Z)-2-carboxy-4-methylthiazol-5(2H)-ylidene]ethyl phosphate + 2 H2O + H(+). It functions in the pathway cofactor biosynthesis; thiamine diphosphate biosynthesis. Its function is as follows. Catalyzes the rearrangement of 1-deoxy-D-xylulose 5-phosphate (DXP) to produce the thiazole phosphate moiety of thiamine. Sulfur is provided by the thiocarboxylate moiety of the carrier protein ThiS. In vitro, sulfur can be provided by H(2)S. This chain is Thiazole synthase, found in Pseudomonas fluorescens (strain SBW25).